A 140-amino-acid polypeptide reads, in one-letter code: Bacilliredoxin STH2395 (140 aa).

This sequence belongs to the bacilliredoxin family.

The sequence is that of Bacilliredoxin STH2395 from Symbiobacterium thermophilum (strain DSM 24528 / JCM 14929 / IAM 14863 / T).